A 79-amino-acid polypeptide reads, in one-letter code: Serine protease inhibitor Kazal-type 1 (79 aa).

Positions 1–23 are cleaved as a signal peptide; that stretch reads MKVASIFLLTALVLMSLSGNSGA. In terms of domain architecture, Kazal-like spans 26-79; sequence LGREAKCTNEVNGCPRIYNPVCGTDGVTYSNECLLCMENKERQTPVLIQKSGPC. Intrachain disulfides connect cysteine 32–cysteine 61, cysteine 39–cysteine 58, and cysteine 47–cysteine 79.

It localises to the secreted. Serine protease inhibitor which exhibits anti-trypsin activity. In the pancreas, protects against trypsin-catalyzed premature activation of zymogens. Its function is as follows. In the male reproductive tract, binds to sperm heads where it modulates sperm capacitance by inhibiting calcium uptake and nitrogen oxide (NO) production. This Bos taurus (Bovine) protein is Serine protease inhibitor Kazal-type 1 (SPINK1).